A 55-amino-acid polypeptide reads, in one-letter code: DIYNYMEPYVSKVDPTDYFGNEQARTAWVDSGAQLGELSYGVLFNIQYVNYWFAP.

This chain is Major pollen allergen Dac g 4, found in Dactylis glomerata (Orchard grass).